Consider the following 125-residue polypeptide: Cu-Zn superoxide dismutase-like protein OPG175 (125 aa).

Cysteine 52 and cysteine 102 are disulfide-bonded.

This sequence belongs to the Cu-Zn superoxide dismutase family.

It localises to the virion. The protein localises to the host cytoplasm. Its function is as follows. Superoxide dismutase-like protein with no enzymatic activity. The sequence is that of Cu-Zn superoxide dismutase-like protein OPG175 (OPG175) from Monkeypox virus.